The primary structure comprises 586 residues: Assimilatory ferredoxin-dependent nitrite reductase (586 aa).

Residues cysteine 411, cysteine 417, cysteine 455, and cysteine 459 each coordinate [4Fe-4S] cluster. Cysteine 459 lines the siroheme pocket. The segment at 566–586 (SWYPFADEDEPPKTEQPMTSD) is disordered.

Belongs to the nitrite and sulfite reductase 4Fe-4S domain family. As to quaternary structure, monomer. Siroheme is required as a cofactor. The cofactor is [4Fe-4S] cluster.

It carries out the reaction 6 oxidized [2Fe-2S]-[ferredoxin] + NH4(+) + 2 H2O = nitrite + 6 reduced [2Fe-2S]-[ferredoxin] + 8 H(+). It functions in the pathway nitrogen metabolism; nitrate reduction (assimilation). Inhibited by cyanide and azide. Its function is as follows. Catalyzes the reduction of nitrite to ammonium in the nitrate assimilation pathway, using ferredoxin as the electron donor. Can use reduced methyl viologen but neither NADPH nor NADH as electron donors. The sequence is that of Assimilatory ferredoxin-dependent nitrite reductase from Haloferax mediterranei (strain ATCC 33500 / DSM 1411 / JCM 8866 / NBRC 14739 / NCIMB 2177 / R-4) (Halobacterium mediterranei).